The chain runs to 364 residues: Fructose-bisphosphate aldolase A (364 aa).

T9 carries the post-translational modification Phosphothreonine. Residues S36 and S39 each carry the phosphoserine modification. K42 bears the N6-acetyllysine; alternate mark. K42 is covalently cross-linked (Glycyl lysine isopeptide (Lys-Gly) (interchain with G-Cter in SUMO1); alternate). Residue K42 forms a Glycyl lysine isopeptide (Lys-Gly) (interchain with G-Cter in SUMO2); alternate linkage. R43 serves as a coordination point for beta-D-fructose 1,6-bisphosphate. Residue S46 is modified to Phosphoserine. N6-(2-hydroxyisobutyryl)lysine is present on K99. K108 is subject to N6-acetyllysine. Position 111 is an N6-acetyllysine; alternate (K111). K111 carries the N6-malonyllysine; alternate modification. At S132 the chain carries Phosphoserine. An N6-(2-hydroxyisobutyryl)lysine modification is found at K147. The Proton acceptor role is filled by E188. The active-site Schiff-base intermediate with dihydroxyacetone-P is the K230. S272 bears the Phosphoserine mark. Beta-D-fructose 1,6-bisphosphate is bound by residues 272-274 (SGG), S301, and R304. K312 carries the N6-malonyllysine modification. K330 carries the post-translational modification N6-acetyllysine. Position 361 is a deamidated asparagine; in form beta (N361).

This sequence belongs to the class I fructose-bisphosphate aldolase family. In terms of assembly, homotetramer. Interacts with SNX9 and WAS. Interacts with FBP2; the interaction blocks FBP2 inhibition by physiological concentrations of AMP and reduces inhibition by Ca(2+). In terms of processing, asn-361 in form alpha is deaminated to Asp in form beta.

The protein resides in the cytoplasm. Its subcellular location is the myofibril. The protein localises to the sarcomere. It is found in the i band. It localises to the m line. The catalysed reaction is beta-D-fructose 1,6-bisphosphate = D-glyceraldehyde 3-phosphate + dihydroxyacetone phosphate. It functions in the pathway carbohydrate degradation; glycolysis; D-glyceraldehyde 3-phosphate and glycerone phosphate from D-glucose: step 4/4. Functionally, plays a key role in glycolysis and gluconeogenesis. In addition, may also function as scaffolding protein. The protein is Fructose-bisphosphate aldolase A (ALDOA) of Oryctolagus cuniculus (Rabbit).